A 1224-amino-acid chain; its full sequence is Serine/threonine-protein kinase CST20 (1224 aa).

The segment covering 1–18 has biased composition (polar residues); it reads MSILSENNPTPTSITDPN. Disordered stretches follow at residues 1-378 and 403-464; these read MSIL…TAHN and TNSS…HSQE. 2 stretches are compositionally biased toward low complexity: residues 57-70 and 95-119; these read NTTS…SLGS and DSGS…NPES. The span at 144–155 shows a compositional bias: basic and acidic residues; the sequence is HQGDDSDNEKQY. Polar residues-rich tracts occupy residues 169 to 191, 201 to 218, and 231 to 240; these read DSYS…NNVS, TSSL…NENA, and PTSKTSSFHD. A compositionally biased stretch (low complexity) spans 242–251; it reads SSVISSSTSV. 2 stretches are compositionally biased toward polar residues: residues 256–271 and 305–324; these read SNPT…SYKS and DTLS…TLQG. Composition is skewed to low complexity over residues 343–375 and 433–462; these read NTSA…STST and KVRG…NSHS. A CRIB domain is found at 469 to 482; that stretch reads ISTPFNAKHLAHVG. Disordered regions lie at residues 539–825 and 861–913; these read FHFD…ALAD and LREK…KQAA. Residues 544–555 are compositionally biased toward polar residues; it reads NKSSSSGWSNEN. Residues 564 to 575 show a composition bias toward gly residues; that stretch reads SNSGSGSGGGGA. Over residues 598–607 the composition is skewed to polar residues; sequence ITPSQSMPTK. Residues 608–622 are compositionally biased toward basic and acidic residues; sequence TESKQSENQHPHEDN. Residues 623–636 show a composition bias toward polar residues; sequence ATQYTPRTPTSHVQ. Low complexity-rich tracts occupy residues 664-677, 690-704, and 730-743; these read PSSQ…SQSD, SPSK…SKSL, and SIPK…SLSS. The segment covering 744 to 755 has biased composition (polar residues); it reads QLRPATNGSTTA. A compositionally biased stretch (pro residues) spans 783 to 801; that stretch reads APPPPPSAPPAPPVPPAPP. The segment covering 805 to 820 has biased composition (polar residues); sequence LSEQTSEIPQQRTAPS. Basic and acidic residues predominate over residues 861–870; it reads LREKNERQNR. Residues 871 to 886 show a composition bias toward polar residues; that stretch reads QQETGQNNADTASGGS. The Protein kinase domain maps to 947 to 1199; sequence YVDLVKIGQG…ADELLHDNFI (253 aa). Residues 953-961 and K977 each bind ATP; that span reads IGQGASGGV. D1067 functions as the Proton acceptor in the catalytic mechanism.

Belongs to the protein kinase superfamily. STE Ser/Thr protein kinase family. STE20 subfamily.

The protein resides in the cytoplasm. The protein localises to the nucleus. It carries out the reaction L-seryl-[protein] + ATP = O-phospho-L-seryl-[protein] + ADP + H(+). The catalysed reaction is L-threonyl-[protein] + ATP = O-phospho-L-threonyl-[protein] + ADP + H(+). MAP4K component of the MAPK pathway required for the mating pheromone response, and the regulation of cell polarity and cell cycle. Phosphorylates histone H2B to form H2BS10ph. Required for hyphal formation and virulence. In Candida albicans (strain WO-1) (Yeast), this protein is Serine/threonine-protein kinase CST20 (CST20).